The primary structure comprises 399 residues: Acetate kinase (399 aa).

Residue Asn8 coordinates Mg(2+). Residue Lys15 coordinates ATP. Arg89 is a substrate binding site. Catalysis depends on Asp146, which acts as the Proton donor/acceptor. ATP is bound by residues 206 to 210, 283 to 285, and 331 to 335; these read HVGNG, DMR, and GMGEN. Residue Glu383 coordinates Mg(2+).

It belongs to the acetokinase family. Homodimer. Mg(2+) serves as cofactor. Requires Mn(2+) as cofactor.

The protein resides in the cytoplasm. It carries out the reaction acetate + ATP = acetyl phosphate + ADP. Its pathway is metabolic intermediate biosynthesis; acetyl-CoA biosynthesis; acetyl-CoA from acetate: step 1/2. Its function is as follows. Catalyzes the formation of acetyl phosphate from acetate and ATP. Can also catalyze the reverse reaction. The sequence is that of Acetate kinase from Streptococcus equi subsp. equi (strain 4047).